A 320-amino-acid chain; its full sequence is Formimidoylglutamase (320 aa).

6 residues coordinate Mn(2+): histidine 125, aspartate 153, histidine 155, aspartate 157, aspartate 244, and aspartate 246.

The protein belongs to the arginase family. Mn(2+) is required as a cofactor.

It catalyses the reaction N-formimidoyl-L-glutamate + H2O = formamide + L-glutamate. It participates in amino-acid degradation; L-histidine degradation into L-glutamate; L-glutamate from N-formimidoyl-L-glutamate (hydrolase route): step 1/1. Catalyzes the conversion of N-formimidoyl-L-glutamate to L-glutamate and formamide. This Rhodococcus jostii (strain RHA1) protein is Formimidoylglutamase.